The sequence spans 180 residues: MFHATTILAYKGKNKSVIGGDGQVSFGNTVLKGNAVKIRKLNNGKVLAGFAGSTADAFNLFDMFENLLQSSKGDLLKAAIDFSKEWRKDKYLRKLEAMMLVLDRNHIFLLSGTGDVVEPEDGQIAAIGSGGNYALSAARALAKHASLDEEELVKSSLQIAGEICIYTNTNIKTYVIEDEK.

Residue Thr5 is part of the active site. 3 residues coordinate Na(+): Gly161, Cys164, and Thr167.

It belongs to the peptidase T1B family. HslV subfamily. As to quaternary structure, a double ring-shaped homohexamer of HslV is capped on each side by a ring-shaped HslU homohexamer. The assembly of the HslU/HslV complex is dependent on binding of ATP.

The protein resides in the cytoplasm. The catalysed reaction is ATP-dependent cleavage of peptide bonds with broad specificity.. Allosterically activated by HslU binding. Functionally, protease subunit of a proteasome-like degradation complex believed to be a general protein degrading machinery. The polypeptide is ATP-dependent protease subunit HslV (Campylobacter jejuni subsp. jejuni serotype O:6 (strain 81116 / NCTC 11828)).